Here is a 621-residue protein sequence, read N- to C-terminus: UvrABC system protein C (621 aa).

The GIY-YIG domain occupies 21–100 (AEPGVYLMRD…IKTYQPPYNV (80 aa)). A UVR domain is found at 210-245 (DELIRELKEKMAQAAQQENYEAAARYRDQIRGLEQL).

This sequence belongs to the UvrC family. As to quaternary structure, interacts with UvrB in an incision complex.

It is found in the cytoplasm. Its function is as follows. The UvrABC repair system catalyzes the recognition and processing of DNA lesions. UvrC both incises the 5' and 3' sides of the lesion. The N-terminal half is responsible for the 3' incision and the C-terminal half is responsible for the 5' incision. This is UvrABC system protein C from Synechococcus sp. (strain JA-3-3Ab) (Cyanobacteria bacterium Yellowstone A-Prime).